Consider the following 218-residue polypeptide: Large ribosomal subunit protein bL25 (218 aa).

2 disordered regions span residues 1–20 (MKTH…GPAR) and 185–218 (PTAA…ASEE). Positions 192–218 (EEGEEGEEGEEGGEGGEAEGAEAASEE) are enriched in acidic residues.

The protein belongs to the bacterial ribosomal protein bL25 family. CTC subfamily. In terms of assembly, part of the 50S ribosomal subunit; part of the 5S rRNA/L5/L18/L25 subcomplex. Contacts the 5S rRNA. Binds to the 5S rRNA independently of L5 and L18.

Its function is as follows. This is one of the proteins that binds to the 5S RNA in the ribosome where it forms part of the central protuberance. The chain is Large ribosomal subunit protein bL25 from Desulfatibacillum aliphaticivorans.